We begin with the raw amino-acid sequence, 432 residues long: UPF0597 protein APL_1605 (432 aa).

Belongs to the UPF0597 family.

This chain is UPF0597 protein APL_1605, found in Actinobacillus pleuropneumoniae serotype 5b (strain L20).